The chain runs to 203 residues: Holliday junction branch migration complex subunit RuvA (203 aa).

The domain I stretch occupies residues 1 to 63 (MIVSLRGTVE…EESQTLYGFT (63 aa)). The interval 64-142 (DDASRRMFVL…GFNDGIPAAA (79 aa)) is domain II. The interval 143–150 (QPQLSIAV) is flexible linker. The interval 150-203 (VDQAVQEQVLEALVGLGFSEKIALPVLSRVLRDSPELSKSQALRAALSELGTKN) is domain III.

The protein belongs to the RuvA family. As to quaternary structure, homotetramer. Forms an RuvA(8)-RuvB(12)-Holliday junction (HJ) complex. HJ DNA is sandwiched between 2 RuvA tetramers; dsDNA enters through RuvA and exits via RuvB. An RuvB hexamer assembles on each DNA strand where it exits the tetramer. Each RuvB hexamer is contacted by two RuvA subunits (via domain III) on 2 adjacent RuvB subunits; this complex drives branch migration. In the full resolvosome a probable DNA-RuvA(4)-RuvB(12)-RuvC(2) complex forms which resolves the HJ.

It localises to the cytoplasm. In terms of biological role, the RuvA-RuvB-RuvC complex processes Holliday junction (HJ) DNA during genetic recombination and DNA repair, while the RuvA-RuvB complex plays an important role in the rescue of blocked DNA replication forks via replication fork reversal (RFR). RuvA specifically binds to HJ cruciform DNA, conferring on it an open structure. The RuvB hexamer acts as an ATP-dependent pump, pulling dsDNA into and through the RuvAB complex. HJ branch migration allows RuvC to scan DNA until it finds its consensus sequence, where it cleaves and resolves the cruciform DNA. The sequence is that of Holliday junction branch migration complex subunit RuvA from Corynebacterium diphtheriae (strain ATCC 700971 / NCTC 13129 / Biotype gravis).